A 692-amino-acid chain; its full sequence is Translation initiation factor IF-2 (692 aa).

Residues 51 to 114 (KAKPENAKKG…KPAETPGKIT (64 aa)) are disordered. Positions 59–84 (KGQNQKQSNNQQQNRQKQNQKNQSKP) are enriched in low complexity. The span at 85–94 (NKNKKQKGPK) shows a compositional bias: basic residues. The region spanning 193 to 362 (ERPAVVTIMG…LLVSEVEELK (170 aa)) is the tr-type G domain. Residues 202-209 (GHVDHGKT) are G1. Residue 202 to 209 (GHVDHGKT) participates in GTP binding. A G2 region spans residues 227-231 (GITQH). The G3 stretch occupies residues 248–251 (DTPG). Residues 248–252 (DTPGH) and 302–305 (NKMD) each bind GTP. A G4 region spans residues 302-305 (NKMD). The tract at residues 338–340 (SAI) is G5.

This sequence belongs to the TRAFAC class translation factor GTPase superfamily. Classic translation factor GTPase family. IF-2 subfamily.

The protein resides in the cytoplasm. Functionally, one of the essential components for the initiation of protein synthesis. Protects formylmethionyl-tRNA from spontaneous hydrolysis and promotes its binding to the 30S ribosomal subunits. Also involved in the hydrolysis of GTP during the formation of the 70S ribosomal complex. The protein is Translation initiation factor IF-2 of Oceanobacillus iheyensis (strain DSM 14371 / CIP 107618 / JCM 11309 / KCTC 3954 / HTE831).